Consider the following 515-residue polypeptide: Maturase K (515 aa).

Belongs to the intron maturase 2 family. MatK subfamily.

It is found in the plastid. Its subcellular location is the chloroplast. Its function is as follows. Usually encoded in the trnK tRNA gene intron. Probably assists in splicing its own and other chloroplast group II introns. This is Maturase K from Picea pungens (Colorado spruce).